The following is a 136-amino-acid chain: uncharacterized protein (136 aa).

Positions 1–33 (MRDHLPPGLPPDPFADDPCDPSAALEAVEPGQP) are disordered.

To M.leprae ML0386.

This is an uncharacterized protein from Mycobacterium tuberculosis (strain CDC 1551 / Oshkosh).